The following is a 321-amino-acid chain: Glycerol-3-phosphate phosphatase (321 aa).

D34 serves as the catalytic Nucleophile. Residues D34, D36, and D260 each coordinate Mg(2+). The active-site Proton donor is D36.

It belongs to the HAD-like hydrolase superfamily. CbbY/CbbZ/Gph/YieH family. As to quaternary structure, homodimer. The cofactor is Mg(2+). In terms of tissue distribution, ubiquitously expressed with higher expression in testis, heart, skeletal muscle and islet tissue (at protein level).

It carries out the reaction O-phospho-L-tyrosyl-[protein] + H2O = L-tyrosyl-[protein] + phosphate. The enzyme catalyses sn-glycerol 1-phosphate + H2O = glycerol + phosphate. The catalysed reaction is sn-glycerol 3-phosphate + H2O = glycerol + phosphate. With respect to regulation, inhibited by orthovanadate, beryllium trifluoride, Ca(2+) and EDTA. In terms of biological role, glycerol-3-phosphate phosphatase hydrolyzing glycerol-3-phosphate into glycerol. Thereby, regulates the cellular levels of glycerol-3-phosphate a metabolic intermediate of glucose, lipid and energy metabolism. Was also shown to have a 2-phosphoglycolate phosphatase activity and a tyrosine-protein phosphatase activity. However, their physiological relevance is unclear. In vitro, also has a phosphatase activity toward ADP, ATP, GDP and GTP. The polypeptide is Glycerol-3-phosphate phosphatase (Mus musculus (Mouse)).